The following is a 39-amino-acid chain: Natriuretic peptide TcNPa (39 aa).

Residues Ser1–Ile8 constitute a propeptide that is removed on maturation. Cys12 and Cys28 are disulfide-bonded. An O-linked (GalNAc...) threonine glycan is attached at Thr35.

The protein belongs to the natriuretic peptide family. Post-translationally, O-linked glycans consist of galactosyl-beta(1-3)-N-acetylgalactosamine (Gal-GalNAc). The synthetic non-glycosylated form shows higher potency on natriuretic receptors (EC(50)=672.90 nM) and NPR2 (EC(50)=261.0 nM). As to expression, expressed by the venom gland.

It localises to the secreted. Its function is as follows. Snake venom natriuretic peptide that targets both NPR1 (EC(50)=1080.0 nM) and NPR2 (EC(50)=328.60 nM). Exhibits hypotensive and vasodepressor activities. This Tropidechis carinatus (Australian rough-scaled snake) protein is Natriuretic peptide TcNPa.